Reading from the N-terminus, the 544-residue chain is Probable protein kinase UbiB (544 aa).

The Protein kinase domain occupies 123–501; it reads EFDIKPLASA…KRQQATGKFL (379 aa). Residues 129 to 137 and lysine 152 each bind ATP; that span reads LASASIAQV. The active-site Proton acceptor is the aspartate 287. The next 2 helical transmembrane spans lie at 496 to 516 and 519 to 539; these read ATGK…AILV and AYEQ…LLSW.

This sequence belongs to the ABC1 family. UbiB subfamily.

Its subcellular location is the cell inner membrane. The protein operates within cofactor biosynthesis; ubiquinone biosynthesis [regulation]. Is probably a protein kinase regulator of UbiI activity which is involved in aerobic coenzyme Q (ubiquinone) biosynthesis. The protein is Probable protein kinase UbiB of Vibrio campbellii (strain ATCC BAA-1116).